The following is a 352-amino-acid chain: Isopentenyl-diphosphate delta-isomerase (352 aa).

6 to 7 lines the substrate pocket; that stretch reads RK. Residues 63–65, Ser-93, and Asn-122 contribute to the FMN site; that span reads AMT. A substrate-binding site is contributed by 93–95; sequence SQR. Position 160 (Gln-160) interacts with substrate. Glu-161 serves as a coordination point for Mg(2+). FMN-binding positions include Lys-192, Thr-221, 271–273, and 292–293; these read GIR and SQ.

It belongs to the IPP isomerase type 2 family. Homooctamer. Dimer of tetramers. FMN serves as cofactor. The cofactor is NADPH. Requires Mg(2+) as cofactor.

The protein localises to the cytoplasm. The enzyme catalyses isopentenyl diphosphate = dimethylallyl diphosphate. In terms of biological role, involved in the biosynthesis of isoprenoids. Catalyzes the 1,3-allylic rearrangement of the homoallylic substrate isopentenyl (IPP) to its allylic isomer, dimethylallyl diphosphate (DMAPP). This chain is Isopentenyl-diphosphate delta-isomerase, found in Pyrobaculum arsenaticum (strain DSM 13514 / JCM 11321 / PZ6).